A 750-amino-acid polypeptide reads, in one-letter code: K(+)-insensitive pyrophosphate-energized proton pump (750 aa).

5 consecutive transmembrane segments (helical) span residues 1 to 21 (MYGL…YQGI), 51 to 71 (FIII…GGLN), 78 to 98 (VVFI…VAWF), 133 to 153 (IGML…LFIP), and 161 to 181 (FIGF…AGGI). K184 is a substrate binding site. Residues D187, D191, and D216 each contribute to the Mg(2+) site. 6 consecutive transmembrane segments (helical) span residues 227 to 247 (DGFE…LLAI), 257 to 277 (LVWI…SYWV), 301 to 321 (LVWL…YMLI), 327 to 347 (GTMW…GALI), 391 to 411 (WMGL…TLGL), and 420 to 440 (VFAF…TIAV). Residue D448 participates in Mg(2+) binding. The next 4 helical transmembrane spans lie at 503–523 (VLIG…IMIL), 538–558 (ILWP…YWFT), 607–627 (GMIN…CLES), and 629–649 (LFIG…IFMA). The Ca(2+) site is built by D656, D681, and D685. K688 contributes to the substrate binding site. 2 helical membrane-spanning segments follow: residues 694–714 (ALNP…ELAI) and 716–736 (LPTT…LVFV).

It belongs to the H(+)-translocating pyrophosphatase (TC 3.A.10) family. K(+)-insensitive subfamily. As to quaternary structure, homodimer. Mg(2+) is required as a cofactor.

The protein resides in the cell inner membrane. It catalyses the reaction diphosphate + H2O + H(+)(in) = 2 phosphate + 2 H(+)(out). In terms of biological role, proton pump that utilizes the energy of pyrophosphate hydrolysis as the driving force for proton movement across the membrane. Generates a proton motive force. The chain is K(+)-insensitive pyrophosphate-energized proton pump from Chlorobaculum tepidum (strain ATCC 49652 / DSM 12025 / NBRC 103806 / TLS) (Chlorobium tepidum).